A 479-amino-acid chain; its full sequence is Glutamate--tRNA ligase (479 aa).

The short motif at 21–31 (PSPTGYLHVGG) is the 'HIGH' region element. A 'KMSKS' region motif is present at residues 248–252 (KLSKR). Residue lysine 251 participates in ATP binding.

It belongs to the class-I aminoacyl-tRNA synthetase family. Glutamate--tRNA ligase type 1 subfamily. As to quaternary structure, monomer.

It is found in the cytoplasm. The catalysed reaction is tRNA(Glu) + L-glutamate + ATP = L-glutamyl-tRNA(Glu) + AMP + diphosphate. Functionally, catalyzes the attachment of glutamate to tRNA(Glu) in a two-step reaction: glutamate is first activated by ATP to form Glu-AMP and then transferred to the acceptor end of tRNA(Glu). The chain is Glutamate--tRNA ligase from Actinobacillus pleuropneumoniae serotype 7 (strain AP76).